Consider the following 304-residue polypeptide: Homoserine kinase (304 aa).

Residue P91–A101 coordinates ATP.

Belongs to the GHMP kinase family. Homoserine kinase subfamily.

Its subcellular location is the cytoplasm. It catalyses the reaction L-homoserine + ATP = O-phospho-L-homoserine + ADP + H(+). The protein operates within amino-acid biosynthesis; L-threonine biosynthesis; L-threonine from L-aspartate: step 4/5. Functionally, catalyzes the ATP-dependent phosphorylation of L-homoserine to L-homoserine phosphate. This chain is Homoserine kinase, found in Solibacter usitatus (strain Ellin6076).